A 475-amino-acid polypeptide reads, in one-letter code: Aspartyl/glutamyl-tRNA(Asn/Gln) amidotransferase subunit B (475 aa).

Belongs to the GatB/GatE family. GatB subfamily. As to quaternary structure, heterotrimer of A, B and C subunits.

The enzyme catalyses L-glutamyl-tRNA(Gln) + L-glutamine + ATP + H2O = L-glutaminyl-tRNA(Gln) + L-glutamate + ADP + phosphate + H(+). It carries out the reaction L-aspartyl-tRNA(Asn) + L-glutamine + ATP + H2O = L-asparaginyl-tRNA(Asn) + L-glutamate + ADP + phosphate + 2 H(+). Its function is as follows. Allows the formation of correctly charged Asn-tRNA(Asn) or Gln-tRNA(Gln) through the transamidation of misacylated Asp-tRNA(Asn) or Glu-tRNA(Gln) in organisms which lack either or both of asparaginyl-tRNA or glutaminyl-tRNA synthetases. The reaction takes place in the presence of glutamine and ATP through an activated phospho-Asp-tRNA(Asn) or phospho-Glu-tRNA(Gln). The sequence is that of Aspartyl/glutamyl-tRNA(Asn/Gln) amidotransferase subunit B from Chlorobium luteolum (strain DSM 273 / BCRC 81028 / 2530) (Pelodictyon luteolum).